A 600-amino-acid chain; its full sequence is Oligopeptide-binding protein OppA (600 aa).

The first 22 residues, 1–22 (MNKLKVTLLASSVVLAATLLSA), serve as a signal peptide directing secretion. A lipid anchor (N-palmitoyl cysteine) is attached at cysteine 23. Cysteine 23 is lipidated: S-diacylglycerol cysteine.

The protein belongs to the bacterial solute-binding protein 5 family. As to quaternary structure, the complex is composed of two ATP-binding proteins (OppD and OppF), two transmembrane proteins (OppB and OppC) and a solute-binding protein (OppA).

Its subcellular location is the cell membrane. Part of the ABC transporter complex OppABCDF involved in the uptake of oligopeptides. Essential for uptake of peptides larger than three amino acids and for growth in milk. The sequence is that of Oligopeptide-binding protein OppA from Lactococcus lactis subsp. lactis (Streptococcus lactis).